The following is an 86-amino-acid chain: MRSATLLLVSCVLLSFILGNVKEVEAVLKPMDQCGRKDIFLGGCGSNGSKTCINDFVKKGGVAAKPSSCECDDFGEEHLCRCYVPC.

The first 26 residues, 1–26 (MRSATLLLVSCVLLSFILGNVKEVEA), serve as a signal peptide directing secretion. 4 cysteine pairs are disulfide-bonded: C34–C86, C44–C71, C52–C80, and C69–C82.

The protein belongs to the DEFL family.

The protein resides in the secreted. The protein is Putative defensin-like protein 234 (SCRL14) of Arabidopsis thaliana (Mouse-ear cress).